The chain runs to 243 residues: Venom nerve growth factor 1 (243 aa).

Positions 1–18 (MSMLCYTLIIAFLIGIWA) are cleaved as a signal peptide. Residues 19 to 125 (VPKSEDNAPL…ALNRNIRAKR (107 aa)) constitute a propeptide that is removed on maturation. Disulfide bonds link Cys139/Cys204, Cys182/Cys232, and Cys192/Cys234. Asn148 carries an N-linked (GlcNAc...) asparagine glycan.

This sequence belongs to the NGF-beta family. As to quaternary structure, homodimer; non-covalently linked. As to expression, expressed by the venom gland.

It localises to the secreted. Functionally, nerve growth factor is important for the development and maintenance of the sympathetic and sensory nervous systems. It stimulates division and differentiation of sympathetic and embryonic sensory neurons as well as basal forebrain cholinergic neurons in the brain. Its relevance in the snake venom is not clear. However, it has been shown to inhibit metalloproteinase-dependent proteolysis of platelet glycoprotein Ib alpha, suggesting a metalloproteinase inhibition to prevent metalloprotease autodigestion and/or protection against prey proteases. Binds a lipid between the two protein chains in the homodimer. The lipid-bound form promotes histamine relase from mouse mast cells, contrary to the lipid-free form. This is Venom nerve growth factor 1 from Naja sputatrix (Malayan spitting cobra).